We begin with the raw amino-acid sequence, 521 residues long: Acetyl-CoA hydrolase (521 aa).

276-280 (GIGNI) serves as a coordination point for CoA. Glu301 functions as the 5-glutamyl coenzyme A thioester intermediate in the catalytic mechanism. CoA is bound by residues Asn391 and Gly395.

It belongs to the acetyl-CoA hydrolase/transferase family.

Its subcellular location is the cytoplasm. It carries out the reaction acetyl-CoA + H2O = acetate + CoA + H(+). Presumably involved in regulating the intracellular acetyl-CoA pool for fatty acid and cholesterol synthesis and fatty acid oxidation. The polypeptide is Acetyl-CoA hydrolase (ach1) (Schizosaccharomyces pombe (strain 972 / ATCC 24843) (Fission yeast)).